We begin with the raw amino-acid sequence, 340 residues long: MEF2 transcription factor homolog (340 aa).

The MADS-box domain maps to 1 to 61; it reads MGRKKIQITR…NKLFQYASTD (61 aa). Disordered regions lie at residues 90 to 112, 193 to 217, 258 to 283, and 312 to 340; these read RKEG…TSPV, NQRN…LDFP, LQQR…NGTS, and PNTY…QQLT. Over residues 200–211 the composition is skewed to low complexity; it reads SSTSVAPSSSSS. The span at 258–268 shows a compositional bias: polar residues; sequence LQQRPVSQPAP. Over residues 269-283 the composition is skewed to low complexity; the sequence is SISNSSTNGISNGTS. Positions 318–332 are enriched in basic and acidic residues; the sequence is MEPHSPPEKRPRITT.

This sequence belongs to the MEF2 family. In terms of assembly, interacts with histone deacetylase hda-4 isoform b.

The protein resides in the nucleus. In terms of biological role, transcription regulator. Binds specifically to the MEF2 element, 5'-[TC]TA[AT][AT][AT][AT]TA[AG]-3' in the regulatory elements of target genes, such as chemoreceptors str-1 and srh-234. Involved in transduction of sensory signals, together with egl-4, kin-29 and hda-4; binding to histone deacetylase hda-4 enables negative modulation of chemoreceptor gene expression in chemosensory neurons. In response to starvation, negatively modulates expression of chemoreceptor srh-234 in ADL sensory neurons, acting in concert with basic helix-loop-helix (bHLH) transcription factors. Plays a role in regulating muscle sensitivity to acetylcholine (ACh) and the magnitude of presynaptic ACh release via a retrograde signal, perhaps by indirectly decreasing Ras-related protein Rab-3 activity. In Caenorhabditis elegans, this protein is MEF2 transcription factor homolog.